The sequence spans 240 residues: uncharacterized protein (240 aa).

3 helical membrane-spanning segments follow: residues 12 to 32 (ICIH…ILMS), 66 to 86 (IQVL…FVLV), and 89 to 109 (ISGY…IYFF). N-linked (GlcNAc...) asparagine; by host glycans are attached at residues Asn129 and Asn157.

The protein resides in the membrane. This is an uncharacterized protein from Acanthamoeba polyphaga mimivirus (APMV).